A 430-amino-acid chain; its full sequence is Tapasin (430 aa).

Residues 1 to 15 (MAAGLRLLLAGLCWS) form the signal peptide. Residues 16 to 399 (QFRVEDAASP…TEGPHLEDIT (384 aa)) are Lumenal-facing. C34 and C99 are oxidised to a cystine. Positions 61-128 (GDAETPPEPG…PDARSPPTAG (68 aa)) are disordered. N-linked (GlcNAc...) asparagine glycosylation is present at N78. Positions 101 to 111 (LNPTNPQTGSD) are enriched in polar residues. 2 consecutive Ig-like C1-type domains span residues 139 to 273 (PQYG…LQLH) and 278 to 382 (PKVT…MRVS). C299 and C368 are joined by a disulfide. A disordered region spans residues 316 to 342 (RAGGSGTSQSPRDTVMDSWTSGHRQAA). A compositionally biased stretch (polar residues) spans 322–338 (TSQSPRDTVMDSWTSGH). Residues 400-417 (GLFLVAFVLCGLIRWLYP) traverse the membrane as a helical segment. At 418–430 (KAARPKEETKKSQ) the chain is on the cytoplasmic side.

Interacts with TAP1 and is thus a subunit of the TAP complex. Interaction with TAP1 is TAP2 independent and is required for efficient peptide-TAP interaction. Obligatory mediator for the interaction between newly assembled MHC class I molecules, calreticulin, ERp57 and TAP. Up to 4 MHC class I/tapasin complexes bind to 1 TAP.

It localises to the endoplasmic reticulum membrane. Functionally, involved in the association of MHC class I with transporter associated with antigen processing (TAP) and in the assembly of MHC class I with peptide (peptide loading). This Gallus gallus (Chicken) protein is Tapasin (TAPBP).